The primary structure comprises 405 residues: F-box/kelch-repeat protein At2g43445 (405 aa).

Residues 7–53 (NTNSIYIVSELLEEIFLGLPLKSILKFKTVSKQWRSILESNLFVERR) enclose the F-box domain. Kelch repeat units follow at residues 146–197 (RDKV…CVNG) and 356–400 (THHD…VVGY).

The sequence is that of F-box/kelch-repeat protein At2g43445 from Arabidopsis thaliana (Mouse-ear cress).